A 513-amino-acid chain; its full sequence is ATP synthase subunit alpha (513 aa).

Residue 169 to 176 (GDRQTGKT) participates in ATP binding.

The protein belongs to the ATPase alpha/beta chains family. As to quaternary structure, F-type ATPases have 2 components, CF(1) - the catalytic core - and CF(0) - the membrane proton channel. CF(1) has five subunits: alpha(3), beta(3), gamma(1), delta(1), epsilon(1). CF(0) has three main subunits: a(1), b(2) and c(9-12). The alpha and beta chains form an alternating ring which encloses part of the gamma chain. CF(1) is attached to CF(0) by a central stalk formed by the gamma and epsilon chains, while a peripheral stalk is formed by the delta and b chains.

The protein localises to the cell inner membrane. It carries out the reaction ATP + H2O + 4 H(+)(in) = ADP + phosphate + 5 H(+)(out). Produces ATP from ADP in the presence of a proton gradient across the membrane. The alpha chain is a regulatory subunit. The protein is ATP synthase subunit alpha of Idiomarina loihiensis (strain ATCC BAA-735 / DSM 15497 / L2-TR).